The sequence spans 516 residues: Phosphatidylserine decarboxylase proenzyme 2, mitochondrial (516 aa).

The N-terminal 21 residues, 1 to 21, are a transit peptide targeting the mitochondrion; that stretch reads MRPRQRFRRFHPRWSKVNLRG. At 22–33 the chain is on the mitochondrial matrix side; the sequence is FGGVGALKGVKA. A helical transmembrane segment spans residues 34–52; sequence LNGMNVRVSMRLKWISNRI. Over 53–516 the chain is Mitochondrial intermembrane; it reads HRIRRSRRLG…GQYVRVGEAL (464 aa). Catalysis depends on charge relay system; for autoendoproteolytic cleavage activity residues aspartate 159, histidine 373, and serine 488. Serine 488 functions as the Schiff-base intermediate with substrate; via pyruvic acid; for decarboxylase activity in the catalytic mechanism. Position 488 is a pyruvic acid (Ser); by autocatalysis (serine 488).

The protein belongs to the phosphatidylserine decarboxylase family. PSD-B subfamily. Eukaryotic type I sub-subfamily. As to quaternary structure, heterodimer of a large membrane-associated beta subunit and a small pyruvoyl-containing alpha subunit. Pyruvate is required as a cofactor. Is synthesized initially as an inactive proenzyme. Formation of the active enzyme involves a self-maturation process in which the active site pyruvoyl group is generated from an internal serine residue via an autocatalytic post-translational modification. Two non-identical subunits are generated from the proenzyme in this reaction, and the pyruvate is formed at the N-terminus of the alpha chain, which is derived from the carboxyl end of the proenzyme. The autoendoproteolytic cleavage occurs by a canonical serine protease mechanism, in which the side chain hydroxyl group of the serine supplies its oxygen atom to form the C-terminus of the beta chain, while the remainder of the serine residue undergoes an oxidative deamination to produce ammonia and the pyruvoyl prosthetic group on the alpha chain. During this reaction, the Ser that is part of the protease active site of the proenzyme becomes the pyruvoyl prosthetic group, which constitutes an essential element of the active site of the mature decarboxylase.

It is found in the mitochondrion. The protein localises to the mitochondrion inner membrane. The protein resides in the nucleus envelope. It localises to the lipid droplet. Its subcellular location is the endoplasmic reticulum membrane. The enzyme catalyses a 1,2-diacyl-sn-glycero-3-phospho-L-serine + H(+) = a 1,2-diacyl-sn-glycero-3-phosphoethanolamine + CO2. It functions in the pathway phospholipid metabolism; phosphatidylethanolamine biosynthesis; phosphatidylethanolamine from CDP-diacylglycerol: step 2/2. Catalyzes the formation of phosphatidylethanolamine (PtdEtn) from phosphatidylserine (PtdSer). Plays a central role in phospholipid metabolism and in the interorganelle trafficking of phosphatidylserine. Together with psd1 and psd3, responsible for the majority of phosphatidylethanolamine synthesis. Plays a role in lipid droplet biogenesis at the endoplasmic reticulum membrane. The sequence is that of Phosphatidylserine decarboxylase proenzyme 2, mitochondrial from Schizosaccharomyces pombe (strain 972 / ATCC 24843) (Fission yeast).